The following is a 263-amino-acid chain: Protein STK_14130 (263 aa).

This sequence belongs to the CinA family.

The sequence is that of Protein STK_14130 from Sulfurisphaera tokodaii (strain DSM 16993 / JCM 10545 / NBRC 100140 / 7) (Sulfolobus tokodaii).